Here is a 431-residue protein sequence, read N- to C-terminus: Divalent metal cation transporter MntH (431 aa).

11 helical membrane passes run 33–53, 61–81, 110–130, 141–161, 170–190, 211–231, 258–278, 307–327, 347–367, 368–388, and 406–426; these read LLKF…PGNF, SSFN…AIFL, WIFW…EFIG, IPMI…VYME, TIIA…LFLA, AVLI…IYLH, ILIA…VSAA, GAFG…GTMA, IITM…MRVL, VLSQ…MLLI, and IVGF…LYLT.

The protein belongs to the NRAMP family.

Its subcellular location is the cell membrane. Functionally, h(+)-stimulated, divalent metal cation uptake system. This is Divalent metal cation transporter MntH from Clostridium acetobutylicum (strain ATCC 824 / DSM 792 / JCM 1419 / IAM 19013 / LMG 5710 / NBRC 13948 / NRRL B-527 / VKM B-1787 / 2291 / W).